The primary structure comprises 704 residues: Protein polyglycylase TTLL10 (704 aa).

3 disordered regions span residues 1–32 (MALH…LPSP), 46–125 (GHRA…SVKE), and 137–170 (DADD…PGQG). Positions 93–105 (VSSKRSKRSRIHP) are enriched in basic residues. Basic and acidic residues predominate over residues 114 to 125 (THEKQMGSSVKE). Residues 169 to 540 (QGPFFYIGGT…TCQKSLHSQK (372 aa)) form the TTL domain. ATP-binding positions include Lys301, 307 to 308 (QG), 350 to 353 (QRYV), 363 to 365 (KFD), and 406 to 407 (TN). Gln307 serves as a coordination point for a protein. Mg(2+) contacts are provided by Asp486, Glu499, and Asn501. A disordered region spans residues 565–704 (LASSRPLNRL…EQRSTSHRGS (140 aa)). 2 stretches are compositionally biased toward pro residues: residues 576–588 (NPNP…ANPH) and 596–612 (HPHP…PPRP). Composition is skewed to low complexity over residues 616 to 629 (AASS…AAIS) and 654 to 667 (SDSS…SEPS).

Requires Mg(2+) as cofactor. As to expression, highly expressed in testis. Expressed in brain, heart, kidney, liver, lung, muscle and trachea.

It localises to the cytoplasm. It is found in the cytoskeleton. Its subcellular location is the cell projection. The protein resides in the cilium. The protein localises to the cilium axoneme. The catalysed reaction is (glycyl)(n)-glycyl-L-glutamyl-[protein] + glycine + ATP = (glycyl)(n+1)-glycyl-L-glutamyl-[protein] + ADP + phosphate + H(+). Polyglycylase which modifies both tubulin and non-tubulin proteins, generating polyglycine side chains of variable lengths on the gamma-carboxyl groups of specific glutamate residues of target proteins. Involved in the elongation step rather than the initiation step of the polyglycylation reaction. Polyglycylates alpha-tubulin and beta-tubulin. Polyglycylates non-tubulin proteins such as nucleosome assembly protein NAP1. This chain is Protein polyglycylase TTLL10, found in Mus musculus (Mouse).